The sequence spans 297 residues: NAD(P)-dependent methylenetetrahydromethanopterin dehydrogenase (297 aa).

It to M.extorquens MtdA. As to quaternary structure, homohexamer.

The protein localises to the cytoplasm. It carries out the reaction 5,10-methylenetetrahydromethanopterin + NAD(+) = 5,10-methenyl-5,6,7,8-tetrahydromethanopterin + NADH. The enzyme catalyses 5,10-methylenetetrahydromethanopterin + NADP(+) = 5,10-methenyl-5,6,7,8-tetrahydromethanopterin + NADPH. It participates in one-carbon metabolism; formaldehyde degradation; formate from formaldehyde (H(4)MPT route): step 2/5. Catalyzes the dehydrogenation of methylene-H(4)MPT. The polypeptide is NAD(P)-dependent methylenetetrahydromethanopterin dehydrogenase (mtdB) (Methylorubrum extorquens (strain ATCC 14718 / DSM 1338 / JCM 2805 / NCIMB 9133 / AM1) (Methylobacterium extorquens)).